The primary structure comprises 368 residues: Peptide chain release factor 2 (368 aa).

An N5-methylglutamine modification is found at glutamine 250.

Belongs to the prokaryotic/mitochondrial release factor family. Methylated by PrmC. Methylation increases the termination efficiency of RF2.

It is found in the cytoplasm. In terms of biological role, peptide chain release factor 2 directs the termination of translation in response to the peptide chain termination codons UGA and UAA. This is Peptide chain release factor 2 from Rickettsia felis (strain ATCC VR-1525 / URRWXCal2) (Rickettsia azadi).